The primary structure comprises 177 residues: Anditomin synthesis protein L (177 aa).

The next 2 membrane-spanning stretches (helical) occupy residues 54 to 74 and 117 to 137; these read VVNS…PFIM and IVNF…YMVF. Asn165 carries N-linked (GlcNAc...) asparagine glycosylation.

It localises to the membrane. Its pathway is secondary metabolite biosynthesis; terpenoid biosynthesis. Part of the gene cluster that mediates the biosynthesis of anditomin, a fungal meroterpenoid. The first step of the pathway is the synthesis of 3,5-dimethylorsellinic acid (DMOA) by the polyketide synthase andM. DMOA is then converted to the phthalide compound 5,7-dihydroxy-4,6-dimethylphthalide (DHDMP) by the cytochrome P450 monooxygenase andK, which is further prenylated by the prenyltransferase andD to yield farnesyl-DHDMP. Further epoxidation by the FAD-dependent monooxygenase andE leads to epoxyfarnesyl-DHDMP. The next step involves the terpene cyclase andB that converts epoxyfarnesyl-DHDMP into preandiloid A through opening of the epoxide ring followed by the cyclization of the farnesyl moiety. Preandiloid A is in turn oxidized at the C-3 hydroxyl group to yield preandiloid B by the dehydrogenase andC. The dioxygenase andA is solely responsible for the dehydrogenation of preandiloid B leading to the enone preandiloid C, as well as for the intriguing structural rearrangement to generate the bicyclo[2.2.2]octane core, transforming preandiloid C into andiconin. FAD-binding monooxygenase andJ then produces andilesin D which is reduced by dehydrogenase andI to yield andilesin A. Action of acetyltransferase andG followed by a spontaneous acetate elimination leads then to andilesin B, which is in turn substrate of the short chain dehydrogenase andH to yield andilesin C. Finally, the dioxygenase andF catalyzes the transformation of andilesin C to anditomin. The exact role of andL within the anditomin biosynthetic pathway has not been identified yet. This Emericella variicolor (Aspergillus stellatus) protein is Anditomin synthesis protein L.